The primary structure comprises 282 residues: Small ribosomal subunit protein uS2 (282 aa).

The segment at 260–282 (KRRRSKVYKEEEREVVTNEDESR) is disordered. A compositionally biased stretch (basic and acidic residues) spans 266–282 (VYKEEEREVVTNEDESR).

Belongs to the universal ribosomal protein uS2 family.

The chain is Small ribosomal subunit protein uS2 from Wolbachia sp. subsp. Drosophila simulans (strain wRi).